Reading from the N-terminus, the 224-residue chain is 7-cyano-7-deazaguanine synthase (224 aa).

Leu8–Ile18 contacts ATP. The Zn(2+) site is built by Cys186, Cys196, Cys199, and Cys202.

This sequence belongs to the QueC family. It depends on Zn(2+) as a cofactor.

It catalyses the reaction 7-carboxy-7-deazaguanine + NH4(+) + ATP = 7-cyano-7-deazaguanine + ADP + phosphate + H2O + H(+). The protein operates within purine metabolism; 7-cyano-7-deazaguanine biosynthesis. Functionally, catalyzes the ATP-dependent conversion of 7-carboxy-7-deazaguanine (CDG) to 7-cyano-7-deazaguanine (preQ(0)). The polypeptide is 7-cyano-7-deazaguanine synthase (Xanthomonas campestris pv. campestris (strain 8004)).